A 371-amino-acid chain; its full sequence is Cuticle collagen 71 (371 aa).

A helical transmembrane segment spans residues 38–60 (GYAAVTFSTVSVICFCVTMPVVF). 2 disordered regions span residues 108–127 (AGYD…GGDA) and 153–371 (EGPH…GTRR). Pro residues predominate over residues 174-186 (PGPPGPPGPPGRP). The segment covering 188–201 (PNGKAGANGLNGNP) has biased composition (low complexity). A compositionally biased stretch (pro residues) spans 202 to 222 (GRPPEAPCEPVTPPPCPPCPA). Residues 223–240 (GPKGAPGQAGYPGADGQP) are compositionally biased toward low complexity. The region spanning 223–280 (GPKGAPGQAGYPGADGQPGSQGDNGEKGSDGAAGEKGRPGPLGKIGEPGATGETGENA) is the Collagen-like domain. Positions 246 to 260 (NGEKGSDGAAGEKGR) are enriched in basic and acidic residues. Residues 314–323 (AGAPGAPGEN) are compositionally biased toward low complexity. The segment covering 340 to 349 (HDGKAGRAGE) has biased composition (basic and acidic residues).

The protein belongs to the cuticular collagen family. In terms of assembly, collagen polypeptide chains are complexed within the cuticle by disulfide bonds and other types of covalent cross-links.

Its subcellular location is the membrane. It localises to the nucleus. Functionally, probable cuticular collagen-like protein. Nematode cuticles are composed largely of collagen-like proteins. The cuticle functions both as an exoskeleton and as a barrier to protect the worm from its environment. Acts downstream of the Wnt signaling pathway, perhaps in the formation of the adult cuticle. The protein is Cuticle collagen 71 of Caenorhabditis elegans.